A 756-amino-acid polypeptide reads, in one-letter code: Amine oxidase [copper-containing] 2 (756 aa).

Over Met-1–Lys-4 the chain is Cytoplasmic. A helical transmembrane segment spans residues Ile-5–Leu-25. Topologically, residues Thr-26–Phe-756 are extracellular. Asn-133, Asn-198, and Asn-226 each carry an N-linked (GlcNAc...) asparagine glycan. Asp-380 functions as the Proton acceptor in the catalytic mechanism. The cysteines at positions 398 and 424 are disulfide-linked. The Schiff-base intermediate with substrate; via topaquinone role is filled by Tyr-465. Residue Tyr-465 is modified to 2',4',5'-topaquinone. The Cu(2+) site is built by His-516 and His-518. Residues Asp-525, Leu-526, Asp-527, Glu-568, Glu-637, Phe-659, and Asn-661 each coordinate Ca(2+). A glycan (N-linked (GlcNAc...) asparagine) is linked at Asn-662. Ca(2+) is bound by residues Glu-663, Asp-669, and Leu-670. His-680 serves as a coordination point for Cu(2+). Cysteines 730 and 737 form a disulfide.

It belongs to the copper/topaquinone oxidase family. As to quaternary structure, homodimer; disulfide-linked. Probably forms heterodimers with AOC3. Requires Cu(2+) as cofactor. Ca(2+) is required as a cofactor. It depends on L-topaquinone as a cofactor. Topaquinone (TPQ) is generated by copper-dependent autoxidation of a specific tyrosyl residue. In terms of tissue distribution, expressed in many tissues including adipocytes with higher expression in retina where it is active. As to expression, not expressed in testis. Not expressed in thymus.

It is found in the cell membrane. The protein resides in the cytoplasm. It catalyses the reaction 2-phenylethylamine + O2 + H2O = 2-phenylacetaldehyde + H2O2 + NH4(+). The enzyme catalyses tryptamine + O2 + H2O = indole-3-acetaldehyde + H2O2 + NH4(+). It carries out the reaction tyramine + O2 + H2O = (4-hydroxyphenyl)acetaldehyde + H2O2 + NH4(+). Functionally, catalyzes the oxidative deamination of primary amines to the corresponding aldehydes with the concomitant production of hydrogen peroxide and ammonia. Has a preference for 2-phenylethylamine, tryptamine and tyramine. Could also act on methylamine and benzylamine but much less efficiently. The sequence is that of Amine oxidase [copper-containing] 2 from Homo sapiens (Human).